We begin with the raw amino-acid sequence, 701 residues long: Centrosomal protein of 83 kDa (701 aa).

Residues 1–14 (MVVSTFTDMDTFPN) are compositionally biased toward polar residues. The disordered stretch occupies residues 1 to 23 (MVVSTFTDMDTFPNNFPPGGDSG). Coiled coils occupy residues 40 to 634 (LRCE…SLIL) and 665 to 698 (HMQE…ELGS). Ser698 bears the Phosphoserine mark.

The protein belongs to the CEP83 family. As to quaternary structure, interacts with CEP164 and IFT20.

The protein localises to the cytoplasm. The protein resides in the cytoskeleton. Its subcellular location is the microtubule organizing center. It is found in the centrosome. It localises to the centriole. Its function is as follows. Component of the distal appendage region of the centriole involved in the initiation of primary cilium assembly. May collaborate with IFT20 in the trafficking of ciliary membrane proteins from the Golgi complex to the cilium during the initiation of primary cilium assembly. This is Centrosomal protein of 83 kDa (CEP83) from Homo sapiens (Human).